The primary structure comprises 512 residues: Maturase K (512 aa).

The protein belongs to the intron maturase 2 family. MatK subfamily.

It is found in the plastid. The protein localises to the chloroplast. In terms of biological role, usually encoded in the trnK tRNA gene intron. Probably assists in splicing its own and other chloroplast group II introns. The polypeptide is Maturase K (Dalea wrightii (Wright's prairie clover)).